The following is a 122-amino-acid chain: Basic phospholipase A2 PLA-B (122 aa).

7 disulfide bridges follow: C26-C115, C28-C44, C43-C95, C49-C122, C50-C88, C57-C81, and C75-C86. Ca(2+) is bound by residues Y27, G29, and G31. Residue H47 is part of the active site. D48 contacts Ca(2+). D89 is an active-site residue.

It belongs to the phospholipase A2 family. Group II subfamily. D49 sub-subfamily. The cofactor is Ca(2+). As to expression, expressed by the venom gland.

It localises to the secreted. The enzyme catalyses a 1,2-diacyl-sn-glycero-3-phosphocholine + H2O = a 1-acyl-sn-glycero-3-phosphocholine + a fatty acid + H(+). In terms of biological role, snake venom phospholipase A2 (PLA2) that displays edema-inducing activities. PLA-B is three times more active than PLA-A in edema-inducing activities. PLA2 catalyzes the calcium-dependent hydrolysis of the 2-acyl groups in 3-sn-phosphoglycerides. The protein is Basic phospholipase A2 PLA-B of Protobothrops flavoviridis (Habu).